The following is a 111-amino-acid chain: UPF0145 protein BTH_I2656 (111 aa).

It belongs to the UPF0145 family.

This Burkholderia thailandensis (strain ATCC 700388 / DSM 13276 / CCUG 48851 / CIP 106301 / E264) protein is UPF0145 protein BTH_I2656.